The following is a 361-amino-acid chain: Phosphoserine aminotransferase (361 aa).

Residue Arg-43 coordinates L-glutamate. Residues 77-78, Trp-103, Thr-153, Asp-173, and Gln-196 each bind pyridoxal 5'-phosphate; that span reads AS. N6-(pyridoxal phosphate)lysine is present on Lys-197. 238 to 239 contacts pyridoxal 5'-phosphate; it reads NT.

The protein belongs to the class-V pyridoxal-phosphate-dependent aminotransferase family. SerC subfamily. Homodimer. It depends on pyridoxal 5'-phosphate as a cofactor.

The protein localises to the cytoplasm. It carries out the reaction O-phospho-L-serine + 2-oxoglutarate = 3-phosphooxypyruvate + L-glutamate. The enzyme catalyses 4-(phosphooxy)-L-threonine + 2-oxoglutarate = (R)-3-hydroxy-2-oxo-4-phosphooxybutanoate + L-glutamate. The protein operates within amino-acid biosynthesis; L-serine biosynthesis; L-serine from 3-phospho-D-glycerate: step 2/3. It participates in cofactor biosynthesis; pyridoxine 5'-phosphate biosynthesis; pyridoxine 5'-phosphate from D-erythrose 4-phosphate: step 3/5. In terms of biological role, catalyzes the reversible conversion of 3-phosphohydroxypyruvate to phosphoserine and of 3-hydroxy-2-oxo-4-phosphonooxybutanoate to phosphohydroxythreonine. This chain is Phosphoserine aminotransferase, found in Pseudomonas paraeruginosa (strain DSM 24068 / PA7) (Pseudomonas aeruginosa (strain PA7)).